A 161-amino-acid chain; its full sequence is Lipoprotein signal peptidase (161 aa).

The next 4 membrane-spanning stretches (helical) occupy residues 11 to 31 (PLFW…KLWV), 44 to 64 (LWSG…FSAF), 66 to 86 (GGAG…IIFA), and 100 to 120 (GCIL…GHVI). Active-site residues include Asp-121 and Asp-137. The chain crosses the membrane as a helical span at residues 135–155 (LADVSINIGIAALLWASFFPV).

The protein belongs to the peptidase A8 family.

The protein localises to the cell inner membrane. The catalysed reaction is Release of signal peptides from bacterial membrane prolipoproteins. Hydrolyzes -Xaa-Yaa-Zaa-|-(S,diacylglyceryl)Cys-, in which Xaa is hydrophobic (preferably Leu), and Yaa (Ala or Ser) and Zaa (Gly or Ala) have small, neutral side chains.. Its pathway is protein modification; lipoprotein biosynthesis (signal peptide cleavage). This protein specifically catalyzes the removal of signal peptides from prolipoproteins. In Synechocystis sp. (strain ATCC 27184 / PCC 6803 / Kazusa), this protein is Lipoprotein signal peptidase.